The chain runs to 270 residues: Monofunctional glycosyltransferase (270 aa).

The tract at residues 1–35 is disordered; sequence MKRSDRYKTYNKPNDSNDSNQLHHNTYFKPVNKPQ. Residues 11 to 24 show a composition bias toward polar residues; that stretch reads NKPNDSNDSNQLHH. The helical transmembrane segment at 47-67 threads the bilayer; that stretch reads LLIPILIIIGIIIGVMYALSL.

The protein belongs to the glycosyltransferase 51 family.

The protein resides in the cell membrane. It catalyses the reaction [GlcNAc-(1-&gt;4)-Mur2Ac(oyl-L-Ala-gamma-D-Glu-L-Lys-D-Ala-D-Ala)](n)-di-trans,octa-cis-undecaprenyl diphosphate + beta-D-GlcNAc-(1-&gt;4)-Mur2Ac(oyl-L-Ala-gamma-D-Glu-L-Lys-D-Ala-D-Ala)-di-trans,octa-cis-undecaprenyl diphosphate = [GlcNAc-(1-&gt;4)-Mur2Ac(oyl-L-Ala-gamma-D-Glu-L-Lys-D-Ala-D-Ala)](n+1)-di-trans,octa-cis-undecaprenyl diphosphate + di-trans,octa-cis-undecaprenyl diphosphate + H(+). It functions in the pathway cell wall biogenesis; peptidoglycan biosynthesis. Its function is as follows. Peptidoglycan polymerase that catalyzes glycan chain elongation using lipid-linked disaccharide-pentapeptide as the substrate. The sequence is that of Monofunctional glycosyltransferase from Staphylococcus saprophyticus subsp. saprophyticus (strain ATCC 15305 / DSM 20229 / NCIMB 8711 / NCTC 7292 / S-41).